The primary structure comprises 251 residues: uncharacterized protein (251 aa).

Residues 192-238 form an RING-type zinc finger; the sequence is CMMCVQRGDERVAITTPYTTDCGHTYCYACIMSRLKLVNNVSCPICK.

Its subcellular location is the cytoplasm. This is an uncharacterized protein from Schizosaccharomyces pombe (strain 972 / ATCC 24843) (Fission yeast).